The primary structure comprises 23 residues: HDRPKFCYLPADPGECLAHMRSF.

In terms of domain architecture, BPTI/Kunitz inhibitor spans 7-23 (CYLPADPGECLAHMRSF).

Belongs to the venom Kunitz-type family. In terms of tissue distribution, expressed by the venom gland.

It is found in the secreted. In terms of biological role, serine protease inhibitor that inhibits chymotrypsin. This Daboia siamensis (Eastern Russel's viper) protein is Kunitz-type serine protease inhibitor C8.